A 572-amino-acid polypeptide reads, in one-letter code: Proline--tRNA ligase (572 aa).

The protein belongs to the class-II aminoacyl-tRNA synthetase family. ProS type 1 subfamily. As to quaternary structure, homodimer.

It is found in the cytoplasm. It carries out the reaction tRNA(Pro) + L-proline + ATP = L-prolyl-tRNA(Pro) + AMP + diphosphate. In terms of biological role, catalyzes the attachment of proline to tRNA(Pro) in a two-step reaction: proline is first activated by ATP to form Pro-AMP and then transferred to the acceptor end of tRNA(Pro). As ProRS can inadvertently accommodate and process non-cognate amino acids such as alanine and cysteine, to avoid such errors it has two additional distinct editing activities against alanine. One activity is designated as 'pretransfer' editing and involves the tRNA(Pro)-independent hydrolysis of activated Ala-AMP. The other activity is designated 'posttransfer' editing and involves deacylation of mischarged Ala-tRNA(Pro). The misacylated Cys-tRNA(Pro) is not edited by ProRS. This is Proline--tRNA ligase from Escherichia coli O7:K1 (strain IAI39 / ExPEC).